A 186-amino-acid chain; its full sequence is Elongation factor P (186 aa).

Belongs to the elongation factor P family.

It localises to the cytoplasm. It functions in the pathway protein biosynthesis; polypeptide chain elongation. In terms of biological role, involved in peptide bond synthesis. Stimulates efficient translation and peptide-bond synthesis on native or reconstituted 70S ribosomes in vitro. Probably functions indirectly by altering the affinity of the ribosome for aminoacyl-tRNA, thus increasing their reactivity as acceptors for peptidyl transferase. In Mycoplasmopsis synoviae (strain 53) (Mycoplasma synoviae), this protein is Elongation factor P.